A 258-amino-acid chain; its full sequence is Peptidase inhibitor 15 (258 aa).

Residues 1 to 21 form the signal peptide; that stretch reads MIMNSAVSLVILLSLLCEAHT. A propeptide spanning residues 22–60 is cleaved from the precursor; it reads VVLLNPTDSSLPANNFTDTEAALSTPLESADIPKARRKR. 2 N-linked (GlcNAc...) asparagine glycosylation sites follow: N36 and N124. The SCP domain occupies 71–211; it reads LDYHNQVRGK…RRAVYLVCNY (141 aa).

It belongs to the CRISP family. Post-translationally, N-glycosylated. Weakly expressed. Expressed at low level in prostate, mammary gland, salivary gland and thyroid gland.

Its subcellular location is the secreted. Its function is as follows. Serine protease inhibitor which displays weak inhibitory activity against trypsin. May play a role in facial patterning during embryonic development. The sequence is that of Peptidase inhibitor 15 (Pi15) from Mus musculus (Mouse).